We begin with the raw amino-acid sequence, 411 residues long: Adenylosuccinate synthetase (411 aa).

GTP is bound by residues G11 to K17 and G39 to T41. D12 (proton acceptor) is an active-site residue. Positions 12 and 39 each coordinate Mg(2+). IMP-binding positions include D12–K15, N37–H40, T121, R135, Q215, T230, and R294. H40 acts as the Proton donor in catalysis. T290–R296 is a substrate binding site. Residues R296, K322 to D324, and S400 to S402 contribute to the GTP site.

This sequence belongs to the adenylosuccinate synthetase family. Homodimer. Mg(2+) is required as a cofactor.

The protein localises to the cytoplasm. It carries out the reaction IMP + L-aspartate + GTP = N(6)-(1,2-dicarboxyethyl)-AMP + GDP + phosphate + 2 H(+). Its pathway is purine metabolism; AMP biosynthesis via de novo pathway; AMP from IMP: step 1/2. Functionally, plays an important role in the de novo pathway of purine nucleotide biosynthesis. Catalyzes the first committed step in the biosynthesis of AMP from IMP. The protein is Adenylosuccinate synthetase of Helicobacter pylori (strain ATCC 700392 / 26695) (Campylobacter pylori).